Here is a 1219-residue protein sequence, read N- to C-terminus: FK506-binding protein 15 (1219 aa).

N-acetylmethionine is present on Met1. Residues Ser14 and Ser23 each carry the phosphoserine modification. The disordered stretch occupies residues 41–66 (YTAPKQPKKGQGTAATGNQATPKTAP). The span at 53-66 (TAATGNQATPKTAP) shows a compositional bias: polar residues. The segment at 72-169 (PTILVATAVH…AVEFNKQVCI (98 aa)) is important for function in growth cone organization. N6-acetyllysine is present on Lys92. The PPIase FKBP-type domain occupies 197-290 (GDSLEVAYTG…VFEVEVRRVK (94 aa)). The tract at residues 294-349 (DSGSDGHSVSSRDSAAPSPIPGADNLSADPVVSPPTSIPFKSGEPALRTKSNSLSE) is disordered. 6 positions are modified to phosphoserine: Ser307, Ser311, Ser326, Ser344, Ser346, and Ser356. The disordered stretch occupies residues 381-433 (PQLDSNDSEIEDVNTLQGGGQPVVTPSVQPSLHPAHPALPQMTSQAPQPSVTG). Positions 421–433 (QMTSQAPQPSVTG) are enriched in polar residues. 3 coiled-coil regions span residues 522–789 (AVSK…TDQA), 818–878 (DEHL…GVEA), and 925–951 (TLQL…AEER). The residue at position 619 (Ser619) is a Phosphoserine. The tract at residues 739–761 (LEKNLSERKKKSAQERSQAEEEI) is disordered. The disordered stretch occupies residues 931-1219 (QQEQEKEESS…DDDDDIDWLG (289 aa)). 4 positions are modified to phosphoserine: Ser939, Ser940, Ser941, and Ser956. The span at 957-971 (QEQSASASSGQPQAP) shows a compositional bias: low complexity. Residues Ser979, Ser1024, Ser1056, Ser1061, Ser1065, and Ser1097 each carry the phosphoserine modification. Residues 1090–1100 (QESSTRLSLTS) are compositionally biased toward polar residues. Thr1099 is modified (phosphothreonine). A Phosphoserine modification is found at Ser1114. Residues 1123–1139 (LKKDDVTSSTGPHKELS) are compositionally biased toward basic and acidic residues. A phosphoserine mark is found at Ser1158, Ser1161, Ser1162, Ser1164, and Ser1195. Position 1203 is a phosphothreonine (Thr1203). The segment covering 1207–1219 (GDDDDDDDIDWLG) has biased composition (acidic residues).

This sequence belongs to the FKBP-type PPIase family. In terms of assembly, interacts with WIP and actin. Interacts with TBC1D23.

Its subcellular location is the cytoplasm. The protein resides in the cell projection. It is found in the axon. The protein localises to the early endosome. Its function is as follows. May be involved in the cytoskeletal organization of neuronal growth cones. Seems to be inactive as a PPIase. Involved in the transport of early endosomes at the level of transition between microfilament-based and microtubule-based movement. The sequence is that of FK506-binding protein 15 (FKBP15) from Homo sapiens (Human).